Consider the following 1587-residue polypeptide: NHS-like protein 1 (1587 aa).

S24 is modified (phosphoserine). 2 disordered regions span residues 140–163 and 176–202; these read FAAG…KCSL and RPKT…PLPT. Residues 179–196 show a composition bias toward polar residues; sequence TPTSGDFSDLHTQTNWTK. 2 positions are modified to phosphoserine: S197 and S328. Polar residues predominate over residues 431–446; that stretch reads SAGQLDSRTPGSSSYS. 2 disordered regions span residues 431–470 and 549–584; these read SAGQ…PRHH and SEPW…VSSC. Residues 449 to 470 show a composition bias toward basic and acidic residues; that stretch reads KPRDRPTPRCSVKDDHQSPRHH. S563 carries the phosphoserine modification. Positions 573 to 584 are enriched in polar residues; the sequence is GCSTPTSNVSSC. S629 bears the Phosphoserine mark. 3 disordered regions span residues 661 to 687, 705 to 767, and 789 to 1059; these read KAKK…QTNG, SLPG…SSVK, and NPTG…RPPM. A compositionally biased stretch (low complexity) spans 705–720; that stretch reads SLPGKGGSSPSQSPCS. 4 stretches are compositionally biased toward polar residues: residues 730–750, 757–767, 792–801, and 838–855; these read SRSQ…TPNV, TPSQSDTSSVK, GGCSANTEAA, and RVTS…TPTA. Over residues 885-911 the composition is skewed to low complexity; that stretch reads SLISSMSISSSSTSLSSNTSTEGSGTM. Composition is skewed to pro residues over residues 923–934, 958–972, and 998–1021; these read APPPPPLPPLPS, PLPP…PPEA, and SLPP…PPLD. Positions 1040-1055 are enriched in basic and acidic residues; that stretch reads SSREALRRPANKEEGC. S1079 is modified (phosphoserine). Disordered stretches follow at residues 1083 to 1534 and 1565 to 1587; these read AVLF…ARRA and VDGI…EQKS. Composition is skewed to polar residues over residues 1089-1099 and 1112-1141; these read PSAQEQRTPTA and SRNS…SQSQ. Residues S1157 and S1218 each carry the phosphoserine modification. Over residues 1222 to 1234 the composition is skewed to basic and acidic residues; it reads AEGEAVRSQEEKS. Over residues 1275–1285 the composition is skewed to polar residues; it reads QPNTSPGPTQE. Residues 1360–1370 show a composition bias toward basic and acidic residues; that stretch reads GRKDSEDDHTR. S1373 and S1375 each carry phosphoserine. T1379 carries the phosphothreonine modification. Residues 1392 to 1409 show a composition bias toward polar residues; it reads QVGSIQRSIKKSTTSSDN. Residues 1434-1447 show a composition bias toward basic and acidic residues; sequence KSTDPRFQRSRSEP. Composition is skewed to low complexity over residues 1448–1460 and 1484–1503; these read SADS…SCSP and SGPR…SRYS. Over residues 1576–1587 the composition is skewed to polar residues; the sequence is PSEQCGGTEQKS.

The protein belongs to the NHS family.

In Mus musculus (Mouse), this protein is NHS-like protein 1 (Nhsl1).